Here is a 288-residue protein sequence, read N- to C-terminus: Bis(5'-nucleosyl)-tetraphosphatase, symmetrical (288 aa).

The protein belongs to the Ap4A hydrolase family.

It carries out the reaction P(1),P(4)-bis(5'-adenosyl) tetraphosphate + H2O = 2 ADP + 2 H(+). In terms of biological role, hydrolyzes diadenosine 5',5'''-P1,P4-tetraphosphate to yield ADP. This is Bis(5'-nucleosyl)-tetraphosphatase, symmetrical from Pseudomonas putida (strain ATCC 700007 / DSM 6899 / JCM 31910 / BCRC 17059 / LMG 24140 / F1).